A 214-amino-acid polypeptide reads, in one-letter code: Adenylate kinase (214 aa).

Position 10–15 (10–15) interacts with ATP; it reads GAGKGT. The tract at residues 30–59 is NMP; the sequence is STGDMLRAAIKAGTELGKQAKSVIDAGQLV. Residues threonine 31, arginine 36, 57-59, 85-88, and glutamine 92 each bind AMP; these read QLV and GFPR. The interval 122-159 is LID; that stretch reads GRRAHLASGRTYHNVYNPPKVEGKDDVTGEDLVIREDD. ATP-binding positions include arginine 123 and 132 to 133; that span reads TY. AMP-binding residues include arginine 156 and arginine 167. Residue lysine 200 coordinates ATP.

It belongs to the adenylate kinase family. Monomer.

It is found in the cytoplasm. It carries out the reaction AMP + ATP = 2 ADP. It functions in the pathway purine metabolism; AMP biosynthesis via salvage pathway; AMP from ADP: step 1/1. Functionally, catalyzes the reversible transfer of the terminal phosphate group between ATP and AMP. Plays an important role in cellular energy homeostasis and in adenine nucleotide metabolism. The chain is Adenylate kinase from Photobacterium profundum (strain SS9).